A 773-amino-acid polypeptide reads, in one-letter code: FT-interacting protein 3 (773 aa).

Positions 1 to 16 are enriched in basic and acidic residues; it reads MQRPPPEDFSLKETRP. Residues 1–24 are disordered; that stretch reads MQRPPPEDFSLKETRPHLGGGKLS. C2 domains are found at residues 22–142, 181–305, and 345–471; these read KLSG…PQWY, VSGT…SRWY, and YSSD…THSY. Ca(2+) is bound by residues Asp-55, Asp-61, Asp-108, Asp-110, and Asp-115. The next 3 helical transmembrane spans lie at 574–594, 608–628, and 716–736; these read IMGV…ICNW, IILV…LFLI, and LFVL…FQVV.

This sequence belongs to the MCTP family. As to quaternary structure, interacts with and regulates subcellular localization and trafficking of STM. It depends on Ca(2+) as a cofactor. As to expression, accumulates in vascular tissues, leaf primordia and flowers. Highly expressed in roots meristems and in both vegetative and inflorescence shoot apical meristems (SAMs).

Its subcellular location is the endoplasmic reticulum membrane. The protein resides in the cytoplasm. The protein localises to the vesicle. It is found in the cell membrane. It localises to the endosome membrane. Its subcellular location is the golgi apparatus membrane. Its function is as follows. Required for proliferation and differentiation of shoot stem cells in the shoot apical meristem (SAM), thus determining the appropriate balance between the maintenance of shoot stem cells and their differentiation into other aboveground plant parts via the control of subcellular localization and intercellular trafficking of STM in the shoot apex. Prevents intracellular trafficking of STM to the plasma membrane in cells in the peripheral shoot meristem region thus facilitating STM recycling to the nucleus to maintain stem cells. May function as a signaling molecule by regulating the trafficking of other regulators. This Arabidopsis thaliana (Mouse-ear cress) protein is FT-interacting protein 3.